A 1005-amino-acid polypeptide reads, in one-letter code: Espin-like protein (1005 aa).

ANK repeat units follow at residues 1-31 (MEKQRALVAAKDGDVATLERLLEAGALGPGI), 35-64 (LGAGLVHHATRAGHLDCVKFLVQRAQLPGN), 69-99 (NGATPAHDAAATGSLAELCWLVREGGCGLQD), 103-132 (SGVSPLHLAARFGHPVLVEWLLHEGHSATL), 136-166 (EGARPLHHAAVSGDLTCLKLLTAAHGSSVNR), 170-200 (SGASPLYLACQEGHLHLAQFLVKDCGADVHL), 204-234 (DGMSALHAAAARGHYSLVVWLVTFTDIGLTA), 238-267 (EGATALHFAARGGHTPILDRLLLMGTPILR), and 270-299 (WGGTPLHDAAENGQMECCQTLVSHHVDPSL). Disordered regions lie at residues 333–444 (LMTP…ERGQ) and 462–483 (LGAESSAEAQDNGGSSGPTEQA). The segment covering 334 to 346 (MTPPPPPFPPPPL) has biased composition (pro residues). Polar residues predominate over residues 468–480 (AEAQDNGGSSGPT). The stretch at 517–541 (LQLRRRCQEYESELGRLAAELQALL) forms a coiled coil. Disordered stretches follow at residues 616 to 644 (GDEKPSTRPLQDTCREASASPPRSEAQRQ), 695 to 730 (RSGLASGEPRPGDTEEASDSGISCEEVPSEAGAAAG), and 773 to 795 (LRGQEAARSPGPPSPPSEGPRLG).

In terms of assembly, interacts with MYO3A (via C-terminus). Interacts with MYO3B (via C-terminus).

The protein localises to the cell projection. Its subcellular location is the stereocilium. Its function is as follows. Binds to but does not cross-link actin. Required for the formation and maintenance of inner ear hair cell stereocilia and staircase formation. Essential for normal hearing. This chain is Espin-like protein (ESPNL), found in Homo sapiens (Human).